Reading from the N-terminus, the 601-residue chain is Ribosomal oxygenase 1 (601 aa).

Basic and acidic residues predominate over residues 1 to 11 (MAACGAEERQR). The tract at residues 1-149 (MAACGAEERQ…PGGGGVPGLL (149 aa)) is disordered. A compositionally biased stretch (low complexity) spans 61-70 (ERAAPPQGAA). Basic and acidic residues predominate over residues 73-87 (DRVERAGSSEAKQGD). One can recognise a JmjC domain in the interval 254 to 399 (CSLRLLSPQA…DFLEKLLPAA (146 aa)). Fe cation-binding residues include histidine 300, aspartate 302, and histidine 365.

It belongs to the ROX family. NO66 subfamily. Fe(2+) serves as cofactor.

It is found in the nucleus. The protein localises to the nucleolus. The protein resides in the nucleoplasm. The enzyme catalyses N(6),N(6)-dimethyl-L-lysyl(36)-[histone H3] + 2 2-oxoglutarate + 2 O2 = L-lysyl(36)-[histone H3] + 2 formaldehyde + 2 succinate + 2 CO2. The catalysed reaction is N(6)-methyl-L-lysyl-[protein] + 2-oxoglutarate + O2 = L-lysyl-[protein] + formaldehyde + succinate + CO2. It carries out the reaction L-histidyl-[protein] + 2-oxoglutarate + O2 = (3S)-3-hydroxy-L-histidyl-[protein] + succinate + CO2. Its function is as follows. Oxygenase that can act as both a histone lysine demethylase and a ribosomal histidine hydroxylase. Specifically demethylates 'Lys-4' (H3K4me) and 'Lys-36' (H3K36me) of histone H3, thereby playing a central role in histone code. Preferentially demethylates trimethylated H3 'Lys-4' (H3K4me3) and monomethylated H3 'Lys-4' (H3K4me1) residues, while it has weaker activity for dimethylated H3 'Lys-36' (H3K36me2). Also catalyzes demethylation of non-histone proteins. Also catalyzes the hydroxylation of 60S ribosomal protein L8 on 'His-216', thereby playing a role in ribosome biogenesis. This Gallus gallus (Chicken) protein is Ribosomal oxygenase 1 (RIOX1).